The chain runs to 139 residues: Putative pre-16S rRNA nuclease (139 aa).

The protein belongs to the YqgF nuclease family.

It is found in the cytoplasm. Could be a nuclease involved in processing of the 5'-end of pre-16S rRNA. The polypeptide is Putative pre-16S rRNA nuclease (Haemophilus influenzae (strain 86-028NP)).